The primary structure comprises 169 residues: Major fimbrial subunit SMF-1 (169 aa).

The signal sequence occupies residues 1–11 (MLAAAPLAANA).

This sequence belongs to the fimbrial protein family.

The protein resides in the fimbrium. Involved in adherence to eukaryotic epithelial cells and abiotic surfaces. Mediates agglutination of animal red blood cells. The polypeptide is Major fimbrial subunit SMF-1 (Stenotrophomonas maltophilia (strain K279a)).